The following is a 107-amino-acid chain: EPIDERMAL PATTERNING FACTOR-like protein 3 (107 aa).

The N-terminal stretch at 1 to 24 is a signal peptide; the sequence is MEYMFLLMSKFFFVFPIIIYIGPA. Intrachain disulfides connect Cys-64–Cys-102, Cys-68–Cys-74, and Cys-71–Cys-104.

The protein belongs to the plant cysteine rich small secretory peptide family. Epidermal patterning factor subfamily.

The protein resides in the secreted. Controls stomatal patterning. This chain is EPIDERMAL PATTERNING FACTOR-like protein 3, found in Arabidopsis thaliana (Mouse-ear cress).